Consider the following 407-residue polypeptide: MAAAALRFPVQGTVTFEDVAVKFTQEEWNLLSEAQRCLYRDVTLENLALMSSLGCWCGVEDEAAPSKQSIYIQRETQVRTPMAGVSPKKAHPCEMCGPILGDILHVADHQGTHHKQKLHRCEAWGNKLYDSGNFHQHQNEHIGEKPYRGSVEEALFAKRCKLHVSGESSVFSESGKDFLLRSGLLQQEATHTGKSNSKTECVSLFHGGKSHYSCGGCMKHFSTKDILSQHERLLPTEEPSVWCECGKSSSKYDSFSNHQGVHTREKPYTCGICGKLFNSKSHLLVHQRIHTGEKPYECEVCQKFFRHKYHLIAHQRVHTGERPYECSDCGKSFTHSSTFRVHKRVHTGQKPYECSECGKSFAESSSLTKHRRVHTGEKPYGCSECEKKFRQISSLRHHQRVHKRKGL.

Positions 14–90 (VTFEDVAVKF…PMAGVSPKKA (77 aa)) constitute a KRAB domain. Residues 91–113 (HPCEMCGPILGDILHVADHQGTH) form a C2H2-type 1 zinc finger. The C2H2-type 2; degenerate zinc finger occupies 119–141 (HRCEAWGNKLYDSGNFHQHQNEH). Glycyl lysine isopeptide (Lys-Gly) (interchain with G-Cter in SUMO2) cross-links involve residues Lys176 and Lys198. The C2H2-type 3; degenerate zinc finger occupies 212–234 (YSCGGCMKHFSTKDILSQHERLL). A C2H2-type 4; degenerate zinc finger spans residues 244-262 (ECGKSSSKYDSFSNHQGVH). Glycyl lysine isopeptide (Lys-Gly) (interchain with G-Cter in SUMO2) cross-links involve residues Lys251 and Lys266. 5 C2H2-type zinc fingers span residues 268–290 (YTCGICGKLFNSKSHLLVHQRIH), 296–318 (YECEVCQKFFRHKYHLIAHQRVH), 324–346 (YECSDCGKSFTHSSTFRVHKRVH), 352–374 (YECSECGKSFAESSSLTKHRRVH), and 380–402 (YGCSECEKKFRQISSLRHHQRVH). Residue Lys308 forms a Glycyl lysine isopeptide (Lys-Gly) (interchain with G-Cter in SUMO2) linkage.

The protein belongs to the krueppel C2H2-type zinc-finger protein family.

Its subcellular location is the nucleus. In terms of biological role, may be involved in transcriptional regulation. In Homo sapiens (Human), this protein is Zinc finger protein 552 (ZNF552).